The following is a 221-amino-acid chain: Thiopurine S-methyltransferase (221 aa).

S-adenosyl-L-methionine contacts are provided by Trp-12, Leu-47, Glu-68, and Arg-125.

This sequence belongs to the class I-like SAM-binding methyltransferase superfamily. TPMT family.

It is found in the cytoplasm. It carries out the reaction S-adenosyl-L-methionine + a thiopurine = S-adenosyl-L-homocysteine + a thiopurine S-methylether.. The chain is Thiopurine S-methyltransferase from Legionella pneumophila (strain Corby).